Reading from the N-terminus, the 890-residue chain is Protein FAM171A1 (890 aa).

A signal peptide spans 1-21 (MSRSAALLLCLLGCHVWKAVT). Over 22–303 (KTLREPGAGA…VTQDITTYHT (282 aa)) the chain is Extracellular. N-linked (GlcNAc...) asparagine glycans are attached at residues asparagine 190 and asparagine 194. Residues 304 to 324 (VFLLAILGGMAFILLVLLCLL) form a helical membrane-spanning segment. Topologically, residues 325-890 (LYYCRRKCMK…ERPLMAFNIK (566 aa)) are cytoplasmic. A phosphoserine mark is found at serine 358, serine 360, serine 371, serine 422, serine 443, and serine 525. Disordered regions lie at residues 730 to 759 (AGRNGSNDASLDSGVDMNEPKSARKGRGDA) and 818 to 890 (EGSS…FNIK). The segment covering 747–757 (NEPKSARKGRG) has biased composition (basic and acidic residues). Over residues 822–833 (RRSGGQLPSLQE) the composition is skewed to polar residues. 2 positions are modified to phosphoserine: serine 849 and serine 855. A compositionally biased stretch (acidic residues) spans 858–869 (EEEEDDDDDDQG). Residues 870 to 883 (EDKKSPWQKREERP) are compositionally biased toward basic and acidic residues.

Belongs to the FAM171 family. As to quaternary structure, interacts with ADAM10, NSG1 and OAZ1.

The protein localises to the cell membrane. Involved in the regulation of the cytoskeletal dynamics, plays a role in actin stress fiber formation. The chain is Protein FAM171A1 (FAM171A1) from Pongo abelii (Sumatran orangutan).